Here is a 1693-residue protein sequence, read N- to C-terminus: Putative stoned B-like protein (1693 aa).

The segment covering 1 to 12 (MSWRDRDFDPHG) has biased composition (basic and acidic residues). 7 disordered regions span residues 1–54 (MSWR…ELPA), 222–322 (NQIP…VEKS), 334–371 (TVEITSPDAPHQGAFHDNTPKEPKVVEEEEDDDLPTFS), 383–438 (KEMT…DPNA), 585–807 (GDYH…TSAA), 841–869 (KKMEKLQKKKLKQQGKKAATPTLEPDEED), and 899–1024 (PVKE…FVAD). A compositionally biased stretch (low complexity) spans 26–39 (SSSERAASMRAMRS). Basic and acidic residues-rich tracts occupy residues 279 to 301 (MEDKMEQAEEKARKEEKKEKEET) and 311 to 322 (TTEKHQNEVEKS). A compositionally biased stretch (acidic residues) spans 360-371 (EEEEDDDLPTFS). Residues 393-412 (ENVENEKQEDTHISEGHVEY) are compositionally biased toward basic and acidic residues. Positions 596 to 615 (DENSTSAISGYEQNGASTSL) are enriched in polar residues. Positions 632–643 (YYQGQEYQQEYY) are enriched in low complexity. The DPF 1 motif lies at 684–686 (DPF). A compositionally biased stretch (low complexity) spans 708–722 (SPTPEASSSTGTSAP). Positions 745–760 (PPRPPPAARPPPPRPA) are enriched in pro residues. Over residues 786-807 (KVSTAVKSTESTLKNLEETSAA) the composition is skewed to polar residues. Residues 899 to 913 (PVKEIKKAPEIRRVD) show a composition bias toward basic and acidic residues. Short sequence motifs (DPF) lie at residues 1006 to 1008 (DPF), 1024 to 1026 (DPF), and 1039 to 1041 (DPF). Residues 1062–1095 (ANAENEDDFYNGRQSPTLSTPTPEGGSPISQQRP) are disordered. A compositionally biased stretch (polar residues) spans 1073 to 1095 (GRQSPTLSTPTPEGGSPISQQRP). The region spanning 1136–1283 (GWDLMVRHPI…KCKITRTAKP (148 aa)) is the SHD domain. An MHD domain is found at 1287 to 1606 (QDEVQIHCYD…AKYQYKVEID (320 aa)). The tract at residues 1633–1693 (ELHQPTFNPS…IQIDMKNYGY (61 aa)) is disordered. Residues 1637 to 1651 (PTFNPSTQESDTQQG) are compositionally biased toward polar residues.

It belongs to the Stoned B family.

It localises to the cytoplasm. Potential adapter protein, which may be involved in endocytic vesicle recycling of synaptic vesicles. This chain is Putative stoned B-like protein (unc-41), found in Caenorhabditis elegans.